The sequence spans 301 residues: Heat shock factor protein HSF24 (301 aa).

The DNA-binding element occupies P7 to T101. Disordered regions lie at residues T103–E160 and G221–G244. Residues A107 to S142 show a composition bias toward low complexity. Over residues D233–K243 the composition is skewed to acidic residues.

Belongs to the HSF family. As to quaternary structure, homotrimer. Exhibits temperature-dependent phosphorylation.

It localises to the nucleus. Functionally, DNA-binding protein that specifically binds heat shock promoter elements (HSE) and activates transcription. The chain is Heat shock factor protein HSF24 (HSF24) from Solanum peruvianum (Peruvian tomato).